The chain runs to 836 residues: TATA box-binding protein-associated factor RNA polymerase I subunit C (836 aa).

Disordered stretches follow at residues G662 to E683 and H703 to F836. Polar residues predominate over residues D738 to R754. Positions R780–T796 are enriched in basic and acidic residues. Phosphothreonine is present on T802. Residues P803–P828 show a composition bias toward polar residues.

As to quaternary structure, component of the transcription factor SL1/TIF-IB complex, composed of TBP and at least TAF1A, TAF1B, TAF1C and TAF1D. In the complex interacts directly with TBP, TAF1A and TAF1B. Interaction of the SL1/TIF-IB subunits with TBP excludes interaction of TBP with the transcription factor IID (TFIID) subunits. Interacts with MYC and RRN3. Interacts with p53/TP53; the interaction prevents the association of SL1/TIF-IB with UBTF and represses RNA polymerase I transcription. Part of Pol I pre-initiation complex (PIC), in which Pol I core assembles with RRN3 and promoter-bound UTBF and SL1/TIF-IB complex.

It is found in the nucleus. The protein localises to the nucleolus. Functionally, component of the transcription factor SL1/TIF-IB complex, which is involved in the assembly of the PIC (pre-initiation complex) during RNA polymerase I-dependent transcription. The rate of PIC formation probably is primarily dependent on the rate of association of SL1/TIF-IB with the rDNA promoter. SL1/TIF-IB is involved in stabilization of nucleolar transcription factor 1/UBTF on rDNA. Formation of SL1/TIF-IB excludes the association of TBP with TFIID subunits. Recruits RNA polymerase I to the rRNA gene promoter via interaction with RRN3. The chain is TATA box-binding protein-associated factor RNA polymerase I subunit C (Taf1c) from Mus musculus (Mouse).